We begin with the raw amino-acid sequence, 739 residues long: Phosphoribosylformylglycinamidine synthase subunit PurL (739 aa).

Residue H53 is part of the active site. Residues Y56 and K95 each contribute to the ATP site. E97 lines the Mg(2+) pocket. Residues 98–101 (SHNH) and R120 contribute to the substrate site. Residue H99 is the Proton acceptor of the active site. Residue D121 participates in Mg(2+) binding. Residue Q244 participates in substrate binding. Position 274 (D274) interacts with Mg(2+). 318-320 (ESQ) contacts substrate. The ATP site is built by D501 and G538. N539 is a binding site for Mg(2+). S541 serves as a coordination point for substrate.

The protein belongs to the FGAMS family. In terms of assembly, monomer. Part of the FGAM synthase complex composed of 1 PurL, 1 PurQ and 2 PurS subunits.

It localises to the cytoplasm. The catalysed reaction is N(2)-formyl-N(1)-(5-phospho-beta-D-ribosyl)glycinamide + L-glutamine + ATP + H2O = 2-formamido-N(1)-(5-O-phospho-beta-D-ribosyl)acetamidine + L-glutamate + ADP + phosphate + H(+). It participates in purine metabolism; IMP biosynthesis via de novo pathway; 5-amino-1-(5-phospho-D-ribosyl)imidazole from N(2)-formyl-N(1)-(5-phospho-D-ribosyl)glycinamide: step 1/2. Functionally, part of the phosphoribosylformylglycinamidine synthase complex involved in the purines biosynthetic pathway. Catalyzes the ATP-dependent conversion of formylglycinamide ribonucleotide (FGAR) and glutamine to yield formylglycinamidine ribonucleotide (FGAM) and glutamate. The FGAM synthase complex is composed of three subunits. PurQ produces an ammonia molecule by converting glutamine to glutamate. PurL transfers the ammonia molecule to FGAR to form FGAM in an ATP-dependent manner. PurS interacts with PurQ and PurL and is thought to assist in the transfer of the ammonia molecule from PurQ to PurL. The polypeptide is Phosphoribosylformylglycinamidine synthase subunit PurL (Listeria innocua serovar 6a (strain ATCC BAA-680 / CLIP 11262)).